The following is a 318-amino-acid chain: Protoheme IX farnesyltransferase (318 aa).

Helical transmembrane passes span 29–49 (IIPLLLITTAGSMWIAAQGQV), 51–71 (PVLLLVTMAGGTLAAASAQTI), 102–122 (LIFAIALAVLSFTLLTVFANL), 123–143 (LAASLALSGIIFYVLIYTHWL), 151–171 (IVIGGAAGAIPALVGWAAVTG), 179–199 (LIFAIVFLWTPPHFWALALMI), 219–239 (ATVKQIWYYTLITVAATLLLV), 241–261 (PLHASGIVYAAIAISLGAVFI), and 280–300 (LFLYSISYMMLLCLGMVVDSL).

It belongs to the UbiA prenyltransferase family. Protoheme IX farnesyltransferase subfamily.

It localises to the cell inner membrane. The enzyme catalyses heme b + (2E,6E)-farnesyl diphosphate + H2O = Fe(II)-heme o + diphosphate. It participates in porphyrin-containing compound metabolism; heme O biosynthesis; heme O from protoheme: step 1/1. In terms of biological role, converts heme B (protoheme IX) to heme O by substitution of the vinyl group on carbon 2 of heme B porphyrin ring with a hydroxyethyl farnesyl side group. In Nostoc sp. (strain PCC 7120 / SAG 25.82 / UTEX 2576), this protein is Protoheme IX farnesyltransferase.